The following is a 226-amino-acid chain: Ribonuclease 3 (226 aa).

The 128-residue stretch at 2 to 129 (IESISKIIKY…LIGAIYLDGG (128 aa)) folds into the RNase III domain. Glu42 is a Mg(2+) binding site. Asp46 is a catalytic residue. The Mg(2+) site is built by Asn115 and Glu118. Glu118 is an active-site residue. The DRBM domain occupies 154-223 (DAKTILQELV…ASLMLNQIHN (70 aa)).

This sequence belongs to the ribonuclease III family. As to quaternary structure, homodimer. It depends on Mg(2+) as a cofactor.

It is found in the cytoplasm. It carries out the reaction Endonucleolytic cleavage to 5'-phosphomonoester.. Its function is as follows. Digests double-stranded RNA. Involved in the processing of primary rRNA transcript to yield the immediate precursors to the large and small rRNAs (23S and 16S). Processes some mRNAs, and tRNAs when they are encoded in the rRNA operon. Processes pre-crRNA and tracrRNA of type II CRISPR loci if present in the organism. In Ehrlichia chaffeensis (strain ATCC CRL-10679 / Arkansas), this protein is Ribonuclease 3.